We begin with the raw amino-acid sequence, 349 residues long: Glycosyltransferase 8 domain-containing protein 2 (349 aa).

The Cytoplasmic segment spans residues Met-1 to Lys-6. A helical; Signal-anchor for type II membrane protein membrane pass occupies residues Ile-7–Tyr-24. Over Lys-25–Ser-349 the chain is Lumenal. The N-linked (GlcNAc...) asparagine glycan is linked to Asn-234.

This sequence belongs to the glycosyltransferase 8 family.

The protein resides in the membrane. The sequence is that of Glycosyltransferase 8 domain-containing protein 2 (GLT8D2) from Homo sapiens (Human).